Reading from the N-terminus, the 171-residue chain is Large ribosomal subunit protein uL10 (171 aa).

The protein belongs to the universal ribosomal protein uL10 family. As to quaternary structure, part of the ribosomal stalk of the 50S ribosomal subunit. The N-terminus interacts with L11 and the large rRNA to form the base of the stalk. The C-terminus forms an elongated spine to which L12 dimers bind in a sequential fashion forming a multimeric L10(L12)X complex.

In terms of biological role, forms part of the ribosomal stalk, playing a central role in the interaction of the ribosome with GTP-bound translation factors. This Hyphomonas neptunium (strain ATCC 15444) protein is Large ribosomal subunit protein uL10.